Here is a 266-residue protein sequence, read N- to C-terminus: Ribosomal RNA small subunit methyltransferase A (266 aa).

Residues N12, L14, G39, E61, D87, and N107 each coordinate S-adenosyl-L-methionine.

It belongs to the class I-like SAM-binding methyltransferase superfamily. rRNA adenine N(6)-methyltransferase family. RsmA subfamily.

The protein resides in the cytoplasm. The catalysed reaction is adenosine(1518)/adenosine(1519) in 16S rRNA + 4 S-adenosyl-L-methionine = N(6)-dimethyladenosine(1518)/N(6)-dimethyladenosine(1519) in 16S rRNA + 4 S-adenosyl-L-homocysteine + 4 H(+). Functionally, specifically dimethylates two adjacent adenosines (A1518 and A1519) in the loop of a conserved hairpin near the 3'-end of 16S rRNA in the 30S particle. May play a critical role in biogenesis of 30S subunits. This chain is Ribosomal RNA small subunit methyltransferase A, found in Nitratidesulfovibrio vulgaris (strain DP4) (Desulfovibrio vulgaris).